Here is a 94-residue protein sequence, read N- to C-terminus: Co-chaperonin GroES (94 aa).

It belongs to the GroES chaperonin family. In terms of assembly, heptamer of 7 subunits arranged in a ring. Interacts with the chaperonin GroEL.

Its subcellular location is the cytoplasm. Functionally, together with the chaperonin GroEL, plays an essential role in assisting protein folding. The GroEL-GroES system forms a nano-cage that allows encapsulation of the non-native substrate proteins and provides a physical environment optimized to promote and accelerate protein folding. GroES binds to the apical surface of the GroEL ring, thereby capping the opening of the GroEL channel. This Alkaliphilus oremlandii (strain OhILAs) (Clostridium oremlandii (strain OhILAs)) protein is Co-chaperonin GroES.